We begin with the raw amino-acid sequence, 206 residues long: Recombination protein RecR (206 aa).

Residues 60 to 75 (CAMCNTFCEGGLCDIC) form a C4-type zinc finger. The 96-residue stretch at 83–178 (RRLMVVHMPA…KVSRLSQGIP (96 aa)) folds into the Toprim domain.

It belongs to the RecR family.

Functionally, may play a role in DNA repair. It seems to be involved in an RecBC-independent recombinational process of DNA repair. It may act with RecF and RecO. This is Recombination protein RecR from Neisseria meningitidis serogroup B (strain ATCC BAA-335 / MC58).